A 2399-amino-acid polypeptide reads, in one-letter code: Norsolorinic acid synthase (2399 aa).

The tract at residues 10–247 (LVFGDQTYDF…RQIPIYVPAH (238 aa)) is starter unit:ACP transacylase (SAT) domain. The region spanning 372–805 (KSKLAIVSMS…GGNTALLIED (434 aa)) is the Ketosynthase family 3 (KS3) domain. Catalysis depends on for beta-ketoacyl synthase activity residues C544, H679, and H722. The tract at residues 905–1192 (FAFTGQGSQY…LCGMIKNILG (288 aa)) is malonyl-CoA:ACP transacylase (MAT) domain. The active-site For acyl/malonyl transferase activity is the S995. Positions 1307 to 1327 (VQEAPAAKTETKKMSKLDPTK) are disordered. The segment covering 1315–1327 (TETKKMSKLDPTK) has biased composition (basic and acidic residues). The tract at residues 1340 to 1483 (HKVIEEKTEP…CTVRFTTDSQ (144 aa)) is N-terminal hotdog fold. Positions 1340 to 1658 (HKVIEEKTEP…LRSVPRKALR (319 aa)) constitute a PKS/mFAS DH domain. The segment at 1353–1658 (QFTVETDISR…LRSVPRKALR (306 aa)) is product template (PT) domain. H1372 (proton acceptor; for dehydratase activity) is an active-site residue. Residues 1510–1658 (LTHYNTKSGY…LRSVPRKALR (149 aa)) form a C-terminal hotdog fold region. D1570 acts as the Proton donor; for dehydratase activity in catalysis. The tract at residues 1665 to 1734 (MDKGIRQRGG…AALKASVPKA (70 aa)) is disordered. Low complexity predominate over residues 1677–1698 (GAAKGAVAAPAPAKKMVEPVKA). Pro residues predominate over residues 1708–1723 (AAPPSPSKAAPPPAPK). Residues 1724-1734 (PAALKASVPKA) show a composition bias toward low complexity. Carrier domains lie at 1733–1812 (KADP…AGAA), 1877–1953 (SKVF…GGSG), and 2020–2099 (VART…TGSS). S1770, S1911, and S2057 each carry O-(pantetheine 4'-phosphoryl)serine. Residues 2098–2115 (SSADSDSSSVASNPADPA) are compositionally biased toward low complexity. The interval 2098 to 2149 (SSADSDSSSVASNPADPAATPPRSESSDTEPDDEAPSKPKSGPGSTDSCRST) is disordered. Residues 2140–2149 (PGSTDSCRST) are compositionally biased toward polar residues. The thioesterase/Claisen cyclase (TE/CLC) domain stretch occupies residues 2164–2393 (TLFLLPDGGG…KARVNYVSDL (230 aa)). S2234 serves as the catalytic For thioesterase activity.

It depends on pantetheine 4'-phosphate as a cofactor.

The enzyme catalyses hexanoyl-[ACP] + 7 malonyl-CoA + 6 H(+) = noranthrone + holo-[ACP] + 7 CO2 + 7 CoA + 2 H2O. It functions in the pathway mycotoxin biosynthesis. Functionally, polyketide synthase; part of the fragmented gene cluster that mediates the biosynthesis of dothistromin (DOTH), a polyketide toxin very similar in structure to the aflatoxin precursor, versicolorin B. The first step of the pathway is the conversion of acetate to norsolorinic acid (NOR) and requires the fatty acid synthase subunits hexA and hexB, as well as the polyketide synthase pksA. PksA combines a hexanoyl starter unit and 7 malonyl-CoA extender units to synthesize the precursor NOR. The hexanoyl starter unit is provided to the acyl-carrier protein (ACP) domain by the fungal fatty acid synthase hexA/hexB. The second step is the conversion of NOR to averantin (AVN) and requires the norsolorinic acid ketoreductase nor1, which catalyzes the dehydration of norsolorinic acid to form (1'S)-averantin. The cytochrome P450 monooxygenase avnA then catalyzes the hydroxylation of AVN to 5'hydroxyaverantin (HAVN). The next step is performed by adhA that transforms HAVN to averufin (AVF). Averufin might then be converted to hydroxyversicolorone by cypX and avfA. Hydroxyversicolorone is further converted versiconal hemiacetal acetate (VHA) by moxY. VHA is then the substrate for the versiconal hemiacetal acetate esterase est1 to yield versiconal (VAL). Versicolorin B synthase vbsA then converts VAL to versicolorin B (VERB) by closing the bisfuran ring. Then, the activity of the versicolorin B desaturase verB leads to versicolorin A (VERA). DotB, a predicted chloroperoxidase, may perform epoxidation of the A-ring of VERA. Alternatively, a cytochrome P450, such as cypX or avnA could catalyze this step. It is also possible that another, uncharacterized, cytochrome P450 enzyme is responsible for this step. Opening of the epoxide could potentially be achieved by the epoxide hydrolase epoA. However, epoA seems not to be required for DOTH biosynthesis, but other epoxide hydrolases may have the ability to complement this hydrolysis. Alternatively, opening of the epoxide ring could be achieved non-enzymatically. The next step is the deoxygenation of ring A to yield the 5,8-dihydroxyanthraquinone which is most likely catalyzed by the NADPH dehydrogenase encoded by ver1. The last stages of DOTH biosynthesis are proposed to involve hydroxylation of the bisfuran. OrdB and norB might have oxidative roles here. An alternative possibility is that cytochrome P450 monoogenases such as avnA and cypX might perform these steps in addition to previously proposed steps. In Dothistroma septosporum (Red band needle blight fungus), this protein is Norsolorinic acid synthase.